A 278-amino-acid polypeptide reads, in one-letter code: Para-Rep C1 (278 aa).

In terms of domain architecture, CRESS-DNA virus Rep endonuclease spans 1 to 95 (MACSNWVFTR…VAGPWSYGDL (95 aa)). The RCR-1 motif lies at 8-11 (FTRN). Positions 33 and 39 each coordinate a divalent metal cation. The RCR-2 signature appears at 39–41 (HIQ). Residues 48 to 69 (KKARFSTVKEIIGGNPHVEKMK) carry the Nuclear localization signal motif. Residue Tyr-78 is the For DNA cleavage activity of the active site. The RCR-3 motif lies at 78 to 81 (YVQK). Position 83 (Glu-83) interacts with a divalent metal cation. A Nuclear localization signal motif is present at residues 95–101 (LLKRGSH). Residue 176-178 (GKS) participates in ATP binding.

It belongs to the nanoviridea/circoviridae replication-associated protein family. As to quaternary structure, homooligomer (Potential). Rep binds to repeated DNA motifs (iterons). Mg(2+) is required as a cofactor. The cofactor is Mn(2+).

The protein resides in the host nucleus. The enzyme catalyses ATP + H2O = ADP + phosphate + H(+). In terms of biological role, initiates and terminates the replication only of its own subviral DNA molecule. The closed circular ssDNA genome is first converted to a superhelical dsDNA. Rep binds a specific hairpin at the genome origin of replication. Introduces an endonucleolytic nick within the intergenic region of the genome, thereby initiating the rolling circle replication (RCR). Following cleavage, binds covalently to the 5'-phosphate of DNA as a tyrosyl ester. The cleavage gives rise to a free 3'-OH that serves as a primer for the cellular DNA polymerase. The polymerase synthesizes the (+) strand DNA by rolling circle mechanism. After one round of replication, a Rep-catalyzed nucleotidyl transfer reaction releases a circular single-stranded virus genome, thereby terminating the replication. Displays origin-specific DNA cleavage, nucleotidyl transferase, ATPase and helicase activities. The sequence is that of Para-Rep C1 (C1) from Faba bean necrotic yellows C1 alphasatellite (FBNYC1A).